Here is a 323-residue protein sequence, read N- to C-terminus: Aldo-keto reductase family 1 member C4 (323 aa).

NADP(+) contacts are provided by residues 20-24 (GFGTY) and Asp-50. Tyr-55 serves as the catalytic Proton donor. His-117 provides a ligand contact to substrate. NADP(+) contacts are provided by residues 166 to 167 (SN), Gln-190, 216 to 221 (HSALGT), and 270 to 280 (KSYNEQRIREN).

Belongs to the aldo/keto reductase family. Monomer.

It localises to the cytoplasm. Its subcellular location is the cytosol. The catalysed reaction is chlordecone alcohol + NADP(+) = chlordecone + NADPH + H(+). The enzyme catalyses a 3alpha-hydroxysteroid + NADP(+) = a 3-oxosteroid + NADPH + H(+). It catalyses the reaction a 3alpha-hydroxysteroid + NAD(+) = a 3-oxosteroid + NADH + H(+). It carries out the reaction 5alpha-androstane-3alpha,17beta-diol + NADP(+) = 17beta-hydroxy-5alpha-androstan-3-one + NADPH + H(+). The catalysed reaction is 5alpha-androstane-3beta,17beta-diol + NADP(+) = 17beta-hydroxy-5alpha-androstan-3-one + NADPH + H(+). The enzyme catalyses 5alpha-androstane-3alpha,17beta-diol + NAD(+) = 17beta-hydroxy-5alpha-androstan-3-one + NADH + H(+). It catalyses the reaction 17beta-estradiol + NADP(+) = estrone + NADPH + H(+). It carries out the reaction 17beta-estradiol + NAD(+) = estrone + NADH + H(+). The catalysed reaction is (20S)-hydroxypregn-4-en-3-one + NADP(+) = progesterone + NADPH + H(+). The enzyme catalyses (20S)-hydroxypregn-4-en-3-one + NAD(+) = progesterone + NADH + H(+). It catalyses the reaction androsterone + NADP(+) = 5alpha-androstan-3,17-dione + NADPH + H(+). It carries out the reaction testosterone + NADP(+) = androst-4-ene-3,17-dione + NADPH + H(+). The catalysed reaction is testosterone + NAD(+) = androst-4-ene-3,17-dione + NADH + H(+). The enzyme catalyses 3alpha-hydroxy-5alpha-androstane 17-O-(beta-D-glucuronate) + NADP(+) = 5alpha-dihydrotestosterone 17-O-(beta-D-glucuronate) + NADPH + H(+). It catalyses the reaction (3beta,5alpha,17beta)-3-hydroxy-androstan-17-yl sulfate + NADP(+) = 5alpha-dihydrotestosterone sulfate + NADPH + H(+). It carries out the reaction 5alpha-androstane-3alpha,17beta-diol + NAD(+) = androsterone + NADH + H(+). It participates in steroid metabolism. Its function is as follows. Cytosolic aldo-keto reductase that catalyzes the NADH and NADPH-dependent reduction of ketosteroids to hydroxysteroids. Liver specific enzyme that acts as an NAD(P)(H)-dependent 3-, 17- and 20-ketosteroid reductase on the steroid nucleus and side chain. Displays the ability to catalyze both oxidation and reduction in vitro, but most probably acts as a reductase in vivo since the oxidase activity measured in vitro is inhibited by physiological concentration of NADPH. Acts preferentially as a 3-alpha-hydroxysteroid dehydrogenase (HSD) with a subsidiary 3-beta-HSD activity. Catalyzes efficiently the transformation of the potent androgen 5-alpha-dihydrotestosterone (5alpha-DHT or 17beta-hydroxy-5alpha-androstan-3-one) into the less active form, 5-alpha-androstan-3-alpha,17-beta-diol (3-alpha-diol). Catalyzes the reduction of estrone into 17beta-estradiol but with low efficiency. Metabolizes a broad spectrum of natural and synthetic therapeutic steroid and plays an important role in metabolism of androgens, estrogens, progestereone and conjugated steroids. Catalyzes the biotransformation of the pesticide chlordecone (kepone) to its corresponding alcohol leading to increased biliary excretion of the pesticide and concomitant reduction of its neurotoxicity since bile is the major excretory route. The protein is Aldo-keto reductase family 1 member C4 (AKR1C4) of Macaca fascicularis (Crab-eating macaque).